Consider the following 247-residue polypeptide: Granzyme B (247 aa).

Positions 1 to 18 (MQPILLLLAFLLLPRADA) are cleaved as a signal peptide. Residues 19 to 20 (GE) constitute a propeptide, activation peptide. Residues 21 to 245 (IIGGHEAKPH…FVHWIKKTMK (225 aa)) form the Peptidase S1 domain. A disulfide bridge links Cys49 with Cys65. His64 functions as the Charge relay system in the catalytic mechanism. N-linked (GlcNAc...) asparagine glycans are attached at residues Asn71 and Asn104. The active-site Charge relay system is Asp108. Disulfide bonds link Cys142/Cys209 and Cys173/Cys188. The active-site Charge relay system is the Ser203.

The protein belongs to the peptidase S1 family. Granzyme subfamily.

It localises to the secreted. Its subcellular location is the cytolytic granule. The catalysed reaction is Preferential cleavage: -Asp-|-Xaa- &gt;&gt; -Asn-|-Xaa- &gt; -Met-|-Xaa-, -Ser-|-Xaa-.. Its activity is regulated as follows. Inactivated by the serine protease inhibitor diisopropylfluorophosphate. Abundant protease in the cytosolic granules of cytotoxic T-cells and NK-cells which activates caspase-independent pyroptosis when delivered into the target cell through the immunological synapse. It cleaves after Asp. Once delivered into the target cell, acts by catalyzing cleavage of gasdermin-E (GSDME), releasing the pore-forming moiety of GSDME, thereby triggering pyroptosis and target cell death. Seems to be linked to an activation cascade of caspases (aspartate-specific cysteine proteases) responsible for apoptosis execution. Cleaves caspase-3, -9 and -10 (CASP3, CASP9 and CASP10, respectively) to give rise to active enzymes mediating apoptosis. Cleaves and activates CASP7 in response to bacterial infection, promoting plasma membrane repair. This Homo sapiens (Human) protein is Granzyme B.